The sequence spans 115 residues: Large ribosomal subunit protein bL20 (115 aa).

This sequence belongs to the bacterial ribosomal protein bL20 family.

Binds directly to 23S ribosomal RNA and is necessary for the in vitro assembly process of the 50S ribosomal subunit. It is not involved in the protein synthesizing functions of that subunit. The polypeptide is Large ribosomal subunit protein bL20 (Borrelia garinii subsp. bavariensis (strain ATCC BAA-2496 / DSM 23469 / PBi) (Borreliella bavariensis)).